The following is a 397-amino-acid chain: Ribosomal RNA large subunit methyltransferase I (397 aa).

A PUA domain is found at 2–82 (TTSIYLVKGR…EVINVDFFVK (81 aa)).

The protein belongs to the methyltransferase superfamily. RlmI family.

It is found in the cytoplasm. The enzyme catalyses cytidine(1962) in 23S rRNA + S-adenosyl-L-methionine = 5-methylcytidine(1962) in 23S rRNA + S-adenosyl-L-homocysteine + H(+). Specifically methylates the cytosine at position 1962 (m5C1962) of 23S rRNA. This is Ribosomal RNA large subunit methyltransferase I from Photobacterium profundum (strain SS9).